A 351-amino-acid chain; its full sequence is Glycerol-3-phosphate dehydrogenase 1-like protein (351 aa).

An NAD(+)-binding site is contributed by glycine 11–glycine 16. Lysine 121 lines the substrate pocket. Alanine 154 contacts NAD(+). Residue lysine 205 is the Proton acceptor of the active site. Positions 271, 298, and 300 each coordinate NAD(+). Arginine 271 to asparagine 272 is a binding site for substrate.

It belongs to the NAD-dependent glycerol-3-phosphate dehydrogenase family.

It localises to the cytoplasm. The enzyme catalyses sn-glycerol 3-phosphate + NAD(+) = dihydroxyacetone phosphate + NADH + H(+). Functionally, plays a role in regulating cardiac sodium current. In Danio rerio (Zebrafish), this protein is Glycerol-3-phosphate dehydrogenase 1-like protein (gpd1l).